The chain runs to 929 residues: MPDYKSTLNLPDTPFPMRGDLAKREPGWVKSWQEKKRYEAIRAAAAGRPKFILHDGPPYANGDIHIGHAVNKILKDIIVKAKTLSGFDAPYVPGWDCHGLPIELQVEKTHGKDIPPAKFRELCRAYAAEQIERQKADFIRLGVLGDWSNPYRTMDFQFEADTLRVLGQIQQAGFLYQGAKPVHWCVDCGSALAEAEVEYEDKNSPAIDVGFAVADRADLARRFDVAAIDTPVQIVIWTTTPWTLPANQAVALHPDFPYTLVRTARGLLVLAESLREAALVRYGLADGAEILAHTTGQMLEGLPLWHPFQDRQVPVIVGEHVTADAGTGAVHTAPGHGLDDYVVGSRYGLKVDNPVGDDGRFYASVPLVGGMSIWQANPLIVETLEASGALLAHEKLLHSYPHCWRHKTPIIFRATRQWFIGMDSAGQDSGVRDQGATLREQAMKAVEATQFFPHWGRARLEAMIRNRPDWCVSRQRNWGVPMPFFTHRETGALHPRTTELLEIVAQRVETAGIEAWFALDPAELLGDDAAHYDKTGHTLDVWFDSGVTHACVLKRRSELAHPADLYLEGSDQHRGWFQSSLLTGCATDGRAPYDALLTHGFVVDGKGHKMSKSKGNVIAPQKVMDQYGADILRLWVATTDYSGELSISDEILKRVVEGYRRIRNTLKFLLANLSDFDPREHAMSVDEWLEIDRYALAMTRRLQGELQRHYDAYEFHFIVQKLQSFCSEDLGGFYLDILKDRLYTSAGDSRARRAAQNALHHLTHALVRWMAPILSFTGEEVWTQLADADDSVFLHTRHVLPEQGGEDELLERWARIRALRAEVQKELETVRVAGAIGSSLQAEVTLHATPSTAALLSSLADDLRFVLITSQARVVGADADRVEVAPSAAKKCDRCWHYRDDVDAHPEHPGLCGRCVSNLFGDGEARRHA.

Residues P58–H68 carry the 'HIGH' region motif. E568 serves as a coordination point for L-isoleucyl-5'-AMP. Positions K609–S613 match the 'KMSKS' region motif. Position 612 (K612) interacts with ATP. Zn(2+) contacts are provided by C892, C895, C912, and C915.

The protein belongs to the class-I aminoacyl-tRNA synthetase family. IleS type 1 subfamily. In terms of assembly, monomer. It depends on Zn(2+) as a cofactor.

It localises to the cytoplasm. It catalyses the reaction tRNA(Ile) + L-isoleucine + ATP = L-isoleucyl-tRNA(Ile) + AMP + diphosphate. Functionally, catalyzes the attachment of isoleucine to tRNA(Ile). As IleRS can inadvertently accommodate and process structurally similar amino acids such as valine, to avoid such errors it has two additional distinct tRNA(Ile)-dependent editing activities. One activity is designated as 'pretransfer' editing and involves the hydrolysis of activated Val-AMP. The other activity is designated 'posttransfer' editing and involves deacylation of mischarged Val-tRNA(Ile). This chain is Isoleucine--tRNA ligase, found in Thiobacillus denitrificans (strain ATCC 25259 / T1).